We begin with the raw amino-acid sequence, 267 residues long: tRNA-cytidine(32) 2-sulfurtransferase 1 (267 aa).

Residues 42–47 (SGGKDS) carry the PP-loop motif motif. [4Fe-4S] cluster contacts are provided by C117, C120, and C208.

The protein belongs to the TtcA family. As to quaternary structure, homodimer. Mg(2+) serves as cofactor. The cofactor is [4Fe-4S] cluster.

The protein localises to the cytoplasm. It catalyses the reaction cytidine(32) in tRNA + S-sulfanyl-L-cysteinyl-[cysteine desulfurase] + AH2 + ATP = 2-thiocytidine(32) in tRNA + L-cysteinyl-[cysteine desulfurase] + A + AMP + diphosphate + H(+). Its pathway is tRNA modification. Catalyzes the ATP-dependent 2-thiolation of cytidine in position 32 of tRNA, to form 2-thiocytidine (s(2)C32). The sulfur atoms are provided by the cysteine/cysteine desulfurase (IscS) system. This is tRNA-cytidine(32) 2-sulfurtransferase 1 from Francisella tularensis subsp. novicida (strain U112).